A 321-amino-acid chain; its full sequence is Urease accessory protein UreD (321 aa).

The protein belongs to the UreD family. In terms of assembly, ureD, UreF and UreG form a complex that acts as a GTP-hydrolysis-dependent molecular chaperone, activating the urease apoprotein by helping to assemble the nickel containing metallocenter of UreC. The UreE protein probably delivers the nickel.

It localises to the cytoplasm. Functionally, required for maturation of urease via the functional incorporation of the urease nickel metallocenter. In Photorhabdus laumondii subsp. laumondii (strain DSM 15139 / CIP 105565 / TT01) (Photorhabdus luminescens subsp. laumondii), this protein is Urease accessory protein UreD.